The chain runs to 125 residues: MAITKEDVLEFISNLSVLELSELVKEFEEKFGVSAAPVMVAGGAVAGGAAEAAEEKTEFNLVLVDSGDKKINVIKVVRALTGLGLKEAKDAVEGTPSVLKEGISKDEAEAAKKELEEAGAKVELK.

Belongs to the bacterial ribosomal protein bL12 family. As to quaternary structure, homodimer. Part of the ribosomal stalk of the 50S ribosomal subunit. Forms a multimeric L10(L12)X complex, where L10 forms an elongated spine to which 2 to 4 L12 dimers bind in a sequential fashion. Binds GTP-bound translation factors.

Its function is as follows. Forms part of the ribosomal stalk which helps the ribosome interact with GTP-bound translation factors. Is thus essential for accurate translation. This Campylobacter curvus (strain 525.92) protein is Large ribosomal subunit protein bL12.